Consider the following 423-residue polypeptide: Serine--tRNA ligase (423 aa).

231-233 contacts L-serine; that stretch reads TAE. 262-264 contributes to the ATP binding site; that stretch reads RSE. Residue glutamate 285 participates in L-serine binding. 349-352 contributes to the ATP binding site; that stretch reads EISS. Serine 384 provides a ligand contact to L-serine.

It belongs to the class-II aminoacyl-tRNA synthetase family. Type-1 seryl-tRNA synthetase subfamily. As to quaternary structure, homodimer. The tRNA molecule binds across the dimer.

The protein localises to the cytoplasm. The enzyme catalyses tRNA(Ser) + L-serine + ATP = L-seryl-tRNA(Ser) + AMP + diphosphate + H(+). The catalysed reaction is tRNA(Sec) + L-serine + ATP = L-seryl-tRNA(Sec) + AMP + diphosphate + H(+). It participates in aminoacyl-tRNA biosynthesis; selenocysteinyl-tRNA(Sec) biosynthesis; L-seryl-tRNA(Sec) from L-serine and tRNA(Sec): step 1/1. Its function is as follows. Catalyzes the attachment of serine to tRNA(Ser). Is also able to aminoacylate tRNA(Sec) with serine, to form the misacylated tRNA L-seryl-tRNA(Sec), which will be further converted into selenocysteinyl-tRNA(Sec). This Acinetobacter baylyi (strain ATCC 33305 / BD413 / ADP1) protein is Serine--tRNA ligase.